The sequence spans 310 residues: Syntaxin-related protein KNOLLE (310 aa).

Methionine 1 bears the N-acetylmethionine mark. The Cytoplasmic segment spans residues 1 to 283; the sequence is MNDLMTKSFM…AKSHQRNSRK (283 aa). A coiled-coil region spans residues 94 to 159; sequence NEIVSGLRKA…FQGLRQKMMS (66 aa). Positions 212–274 constitute a t-SNARE coiled-coil homology domain; it reads VVEIQDRYDA…ADGANELKTA (63 aa). Residues 284–304 form a helical; Anchor for type IV membrane protein membrane-spanning segment; it reads WMCIGIIVLLLIILIVVIPII. Topologically, residues 305 to 310 are vesicular; sequence TSFSSS.

The protein belongs to the syntaxin family. As to quaternary structure, interacts with SNAP33 and/or NPSN11 to form a t-SNARE complex and with KEULE. In terms of tissue distribution, abundant in flowers and developing siliques. A low level expression is seen in the seedlings, roots, and leaves.

It is found in the membrane. Functionally, involved in cytokinesis. Acts as a cell plate-specific syntaxin, required for the fusion of vesicles at the plane of cell division. In Arabidopsis thaliana (Mouse-ear cress), this protein is Syntaxin-related protein KNOLLE (KN).